A 374-amino-acid polypeptide reads, in one-letter code: Pulmonary surfactant-associated protein D (374 aa).

Residues 1–19 (MLHFLSMLVLLVQPLGDLG) form the signal peptide. 2 positions are modified to S-nitrosocysteine: cysteine 34 and cysteine 39. The disordered stretch occupies residues 40-221 (SPTENGLPGR…RGIKGESGLP (182 aa)). Residues 45–221 (GLPGRDGRDG…RGIKGESGLP (177 aa)) enclose the Collagen-like domain. A compositionally biased stretch (basic and acidic residues) spans 49 to 64 (RDGRDGREGPRGEKGD). Proline 77 is subject to Hydroxyproline. Lysine 86 is subject to 5-hydroxylysine. N-linked (GlcNAc...) asparagine glycosylation occurs at asparagine 89. Proline 95 is subject to Hydroxyproline. Position 98 is a 5-hydroxylysine (lysine 98). The residue at position 109 (serine 109) is a Phosphoserine. 2 stretches are compositionally biased toward low complexity: residues 137–163 (KGEA…PAGP) and 170–200 (PGEQ…RGPP). Residues proline 170 and proline 176 each carry the hydroxyproline modification. Over residues 203–215 (KGDRGAPGDRGIK) the composition is skewed to basic and acidic residues. Residues 222–253 (DSAALRQQMEALNGKLQRLEAAFSRYKKAALF) adopt a coiled-coil conformation. The C-type lectin domain occupies 259–374 (VGDKIFRAAN…GEQRLVICEF (116 aa)). Cystine bridges form between cysteine 280–cysteine 372 and cysteine 350–cysteine 364.

The protein belongs to the SFTPD family. In terms of assembly, oligomeric complex of 4 set of homotrimers. In terms of processing, S-nitrosylation at Cys-34 and Cys-39 alters the quaternary structure which results in a pro-inflammatory chemoattractive signaling activity with macrophages.

The protein localises to the secreted. Its subcellular location is the extracellular space. It is found in the extracellular matrix. It localises to the surface film. Contributes to the lung's defense against inhaled microorganisms, organic antigens and toxins. Interacts with compounds such as bacterial lipopolysaccharides, oligosaccharides and fatty acids and modulates leukocyte action in immune response. May participate in the extracellular reorganization or turnover of pulmonary surfactant. Binds strongly maltose residues and to a lesser extent other alpha-glucosyl moieties. This chain is Pulmonary surfactant-associated protein D (Sftpd), found in Rattus norvegicus (Rat).